Here is a 235-residue protein sequence, read N- to C-terminus: Peptidyl-tRNA hydrolase (235 aa).

Residue Tyr14 coordinates tRNA. The active-site Proton acceptor is the His19. TRNA is bound by residues Phe64, Asn66, and Asn112. Positions 186–235 (RTAPPRSSGGSPKTDKPAKATREPPPAAKPEATPEEETRSPLQRLVDKFR) are disordered. A compositionally biased stretch (basic and acidic residues) spans 198–207 (KTDKPAKATR).

The protein belongs to the PTH family. In terms of assembly, monomer.

The protein localises to the cytoplasm. It carries out the reaction an N-acyl-L-alpha-aminoacyl-tRNA + H2O = an N-acyl-L-amino acid + a tRNA + H(+). Functionally, hydrolyzes ribosome-free peptidyl-tRNAs (with 1 or more amino acids incorporated), which drop off the ribosome during protein synthesis, or as a result of ribosome stalling. Its function is as follows. Catalyzes the release of premature peptidyl moieties from peptidyl-tRNA molecules trapped in stalled 50S ribosomal subunits, and thus maintains levels of free tRNAs and 50S ribosomes. In Dinoroseobacter shibae (strain DSM 16493 / NCIMB 14021 / DFL 12), this protein is Peptidyl-tRNA hydrolase.